We begin with the raw amino-acid sequence, 140 residues long: Small ribosomal subunit protein bS6 (140 aa).

Residues 96–140 (VTGQSEMLKAEENRSERRERRERPENAESNDGDDSDSNDSDNADE) are disordered. A compositionally biased stretch (basic and acidic residues) spans 103-121 (LKAEENRSERRERRERPEN). The span at 123 to 140 (ESNDGDDSDSNDSDNADE) shows a compositional bias: acidic residues.

It belongs to the bacterial ribosomal protein bS6 family.

In terms of biological role, binds together with bS18 to 16S ribosomal RNA. The sequence is that of Small ribosomal subunit protein bS6 from Ectopseudomonas mendocina (strain ymp) (Pseudomonas mendocina).